Reading from the N-terminus, the 807-residue chain is MSGWPRIYYKLLNLPLSILVKSKSIPADPAPELGLDTSRPIMYVLPYNSKADLLTLRAQCLAHDLPDPLEPLEIDGTLLPRYVFIHGGPRVFTYYTPKEESIKLFHDYLDLHRSNPNLDVQMVPVSVMFGRAPGREKGEVNPPLRMLNGVQKFFAVLWLGRDSFVRFSPSVSLRRMADEHGTDKTIAQKLARVARMHFARQRLAAVGPRLPARQDLFNKLLASRAIAKAVEDEARSKKISHEKAQQNAIALMEEIAANFSYEMIRLTDRILGFTWNRLYQGINVHNAERVRQLAHDGHELVYVPCHRSHMDYLLLSYVLYHQGLVPPHIAAGINLNFWPAGPIFRRLGAFFIRRTFKGNKLYSTVFREYLGELFSRGYSVEYFVEGGRSRTGRLLDPKTGTLSMTIQAMLRGGTRPITLIPIYIGYEHVMEVGTYAKELRGATKEKESLPQMLRGLSKLRNLGQGYVNFGEPMPLMTYLNQHVPDWRESIDPIEAVRPAWLTPTVNNIAADLMVRINNAGAANAMNLCCTALLASRQRSLTREQLTEQLNCYLDLMRNVPYSTDSTVPSASASELIDHALQMNKFEVEKDTIGDIIILPREQAVLMTYYRNNIAHMLVLPSLMAAIVTQHRHISRDVLMEHVNVLYPMLKAELFLRWDRDELPDVIDALANEMQRQGLITLQDDELHINPVHSRTLQLLAAGARETLQRYAITFWLLSANPSINRGTLEKESRTVAQRLSVLHGINAPEFFDKAVFSSLVLTLRDEGYISDSGDAEPAETMKVYQLLAELITSDVRLTIESATQGEG.

The HXXXXD motif motif lies at 306-311 (HRSHMD).

This sequence belongs to the GPAT/DAPAT family.

It localises to the cell inner membrane. The catalysed reaction is sn-glycerol 3-phosphate + an acyl-CoA = a 1-acyl-sn-glycero-3-phosphate + CoA. It functions in the pathway phospholipid metabolism; CDP-diacylglycerol biosynthesis; CDP-diacylglycerol from sn-glycerol 3-phosphate: step 1/3. In Escherichia coli O157:H7, this protein is Glycerol-3-phosphate acyltransferase (plsB).